The sequence spans 215 residues: MTERGCFITVEGLEGAGKTTCLQAIEQMLLEAGIDRPLFTREPGGTPFGEALRGALLDPQYRGLTAEAEALTVFAARAEHLAQVIRPTLDAGRWVISDRFTDATYAYQGGGRGLGDERIAVLERWVHGGFTPDRTLLLDVDPTVGRSRVAHRGDGEDRFEQERDPFFQAARAAYARRAAADPERFRCIDANRPEGEVAEQVRAGVADLLPVGGRP.

Position 12-19 (12-19 (GLEGAGKT)) interacts with ATP.

Belongs to the thymidylate kinase family.

It catalyses the reaction dTMP + ATP = dTDP + ADP. Phosphorylation of dTMP to form dTDP in both de novo and salvage pathways of dTTP synthesis. The chain is Thymidylate kinase from Halorhodospira halophila (strain DSM 244 / SL1) (Ectothiorhodospira halophila (strain DSM 244 / SL1)).